Consider the following 415-residue polypeptide: Zona pellucida-like domain-containing protein 1 (415 aa).

The signal sequence occupies residues 1 to 19; that stretch reads MERVWLLFLLAIRVSPGSA. At 20–373 the chain is on the extracellular side; sequence QFNSYNCDAN…PFQLNAVTSS (354 aa). The 278-residue stretch at 43–320 folds into the ZP domain; it reads YCGVQAITMK…PICGNRKRRD (278 aa). Intrachain disulfides connect C44–C155 and C79–C104. Residue N164 is glycosylated (N-linked (GlcNAc...) asparagine). 2 cysteine pairs are disulfide-bonded: C235/C296 and C255/C313. The chain crosses the membrane as a helical span at residues 374–394; it reads LISGMVILGVLCFSLLLCSLA. The Cytoplasmic portion of the chain corresponds to 395–415; it reads LLHRKGSTSLVLNGVRNPVFE.

Post-translationally, proteolytically cleaved before the transmembrane segment to yield the secreted form found in the extracellular matrix of the cupula.

It localises to the cytoplasmic vesicle membrane. The protein localises to the secreted. It is found in the extracellular space. The protein resides in the extracellular matrix. Glycoprotein which is a component of the gelatinous extracellular matrix in the cupulae of the vestibular organ. The sequence is that of Zona pellucida-like domain-containing protein 1 (Zpld1) from Mus musculus (Mouse).